The chain runs to 335 residues: 2,4-dienoyl-CoA reductase [(3E)-enoyl-CoA-producing], mitochondrial (335 aa).

Residues 1-34 (MKLPARVFFTLGSRLPCGLAPRRFFSYGTKILYQ) constitute a mitochondrion transit peptide. Residues Lys-42 and Lys-49 each carry the N6-acetyllysine; alternate modification. Lys-42 and Lys-49 each carry N6-succinyllysine; alternate. Residue 66–71 (GGGTGL) coordinates NADP(+). Thr-69 carries the phosphothreonine modification. Position 73 is an N6-succinyllysine (Lys-73). Arg-91 contacts NADP(+). Arg-91 provides a ligand contact to substrate. N6-acetyllysine; alternate is present on Lys-97. Lys-97 is modified (N6-succinyllysine; alternate). Asp-117 provides a ligand contact to NADP(+). Substrate is bound by residues Arg-119, Phe-149, and Ser-157. The Proton acceptor role is filled by Tyr-199. Lys-214 lines the NADP(+) pocket. Lys-230 carries the post-translational modification N6-acetyllysine. 240–243 (PGPI) is an NADP(+) binding site. Lys-244 carries the N6-acetyllysine; alternate modification. Residue Lys-244 is modified to N6-succinyllysine; alternate. Arg-251 is a substrate binding site. Residues Lys-260 and Lys-319 each carry the N6-acetyllysine; alternate modification. N6-succinyllysine; alternate occurs at positions 260 and 319.

Belongs to the short-chain dehydrogenases/reductases (SDR) family. 2,4-dienoyl-CoA reductase subfamily. Homotetramer. Heart = liver = pancreas &gt; kidney &gt;&gt; skeletal muscle = lung.

Its subcellular location is the mitochondrion. It catalyses the reaction a (2E,4E)-dienoyl-CoA + NADPH + H(+) = a 4,5-saturated-(3E)-enoyl-CoA + NADP(+). The enzyme catalyses a (2E,4Z)-dienoyl-CoA + NADPH + H(+) = a 4,5-saturated-(3E)-enoyl-CoA + NADP(+). The catalysed reaction is (2E,4E)-hexadienoyl-CoA + NADPH + H(+) = (3E)-hexenoyl-CoA + NADP(+). Its function is as follows. Auxiliary enzyme of beta-oxidation. It participates in the metabolism of unsaturated fatty enoyl-CoA esters having double bonds in both even- and odd-numbered positions in mitochondria. Catalyzes the NADP-dependent reduction of 2,4-dienoyl-CoA to yield trans-3-enoyl-CoA. In Homo sapiens (Human), this protein is 2,4-dienoyl-CoA reductase [(3E)-enoyl-CoA-producing], mitochondrial (DECR1).